Here is a 248-residue protein sequence, read N- to C-terminus: Homeobox protein CHOX-CAD (248 aa).

The homeobox DNA-binding region spans 137 to 196 (KDKYRVVYTDHQRLELEKEFHYSRYITIRRKAELAAALGLTERQVKIWFQNRRAKERKVN). Positions 192-248 (ERKVNKKKLQQQSQPTSTTTPTPPAVGTPGPMGTLCSGSAPSLVSSSPLTIKEEFMP) are disordered. Composition is skewed to low complexity over residues 201–211 (QQQSQPTSTTT) and 228–240 (SGSA…SSPL).

The protein belongs to the Caudal homeobox family.

The protein localises to the nucleus. Its function is as follows. May play an important role during the early steps of organogenesis. The sequence is that of Homeobox protein CHOX-CAD (CHOX-CAD1) from Gallus gallus (Chicken).